The sequence spans 121 residues: RxLR effector protein PexRD2 (121 aa).

An N-terminal signal peptide occupies residues 1-20 (MRLSYVIVVIATSFLVTTEA). The RxLR-dEER motif lies at 38-56 (RLLRKHYTAAENDDDSEAR). The interval 57–121 (ALNTEKMKTM…LNYVAEHTAV (65 aa)) is WY domain.

It belongs to the RxLR effector family. As to quaternary structure, homodimer. Interacts with host MAPKKK epsilon (via its kinase domain).

It is found in the secreted. The protein resides in the host cytoplasm. The protein localises to the host nucleus. Effector that enhances P.infestans colonization of Nicotiana benthamiana leaves. Induces a weak Cell death response in N.benthamiana. PexRD2-induced cell death is dependent on SGT1, suggesting that PexRD2 is recognized by the plant immune system. Interacts with the kinase domain of the host MAPKKK epsilon, a positive regulator of cell death associated with plant immunity, and perturbs signaling pathways triggered by MAPKKK epsilon. The chain is RxLR effector protein PexRD2 from Phytophthora infestans (strain T30-4) (Potato late blight agent).